Consider the following 410-residue polypeptide: Peptide chain release factor subunit 1 (410 aa).

The protein belongs to the eukaryotic release factor 1 family. In terms of assembly, heterodimer of two subunits, one of which binds GTP.

The protein resides in the cytoplasm. Functionally, directs the termination of nascent peptide synthesis (translation) in response to the termination codons UAA, UAG and UGA. The polypeptide is Peptide chain release factor subunit 1 (Picrophilus torridus (strain ATCC 700027 / DSM 9790 / JCM 10055 / NBRC 100828 / KAW 2/3)).